The sequence spans 588 residues: Snake venom 5'-nucleotidase (588 aa).

An N-terminal signal peptide occupies residues 1-40 (MQTPKRRRGAQGCPRSSPSPPLLLLVGAVWFCAALSVAAG). Zn(2+) contacts are provided by D51 and H53. C66 and C71 are joined by a disulfide. N-linked (GlcNAc...) asparagine glycosylation is present at N88. Zn(2+)-binding residues include D99 and N131. N-linked (GlcNAc...) asparagine glycosylation occurs at N167. The Zn(2+) site is built by H234 and H257. N327, N347, and N361 each carry an N-linked (GlcNAc...) asparagine glycan. Intrachain disulfides connect C367-C372 and C379-C401. AMP is bound at residue R368. Positions 404 and 409 each coordinate AMP. An N-linked (GlcNAc...) asparagine glycan is attached at N418. F432 contributes to the AMP binding site. C491 and C494 are joined by a disulfide. AMP contacts are provided by F515 and D521. Residue N532 is glycosylated (N-linked (GlcNAc...) asparagine). Residue S564 is the site of GPI-anchor amidated serine attachment. A propeptide spans 565–588 (AGTLFQAQLFLTWGLCISLLYFIL) (removed in mature form).

Belongs to the 5'-nucleotidase family. Zn(2+) serves as cofactor. Post-translationally, venom 5'-nucleotidases (or a part thereof) may be released into the venom via exosome-like vesicles. They may be attached via a GPI anchor to the membrane of these vesicles. Soluble forms of 5'-nucleotidase might be released by cleavage of the ectodomain in the exosome-like vesicles or venom gland cells. As to expression, expressed by the venom gland.

It is found in the membrane. It carries out the reaction a ribonucleoside 5'-phosphate + H2O = a ribonucleoside + phosphate. In terms of biological role, hydrolyzes nucleotides into nucleosides. Snake venom 5'-nucleotidases are widely distributed among venomous snake taxa, but there is a lack of information about their biological activities. They have been shown to inhibit platelet aggregation. This effect may be due to the liberation of inhibitory AMP or adenosine by its action on ADP released upon initiation of aggregation. Venom 5'-nucleotidases are also known to synergistically act in vivo with other toxins like ADPases, phospholipases, and disintegrins to exert a more pronounced anti-coagulant effect. The sequence is that of Snake venom 5'-nucleotidase from Gloydius brevicauda (Korean slamosa snake).